The sequence spans 122 residues: Large ribosomal subunit protein uL14 (122 aa).

It belongs to the universal ribosomal protein uL14 family. Part of the 50S ribosomal subunit. Forms a cluster with proteins L3 and L19. In the 70S ribosome, L14 and L19 interact and together make contacts with the 16S rRNA in bridges B5 and B8.

Binds to 23S rRNA. Forms part of two intersubunit bridges in the 70S ribosome. The protein is Large ribosomal subunit protein uL14 of Pseudomonas entomophila (strain L48).